Here is a 240-residue protein sequence, read N- to C-terminus: Large ribosomal subunit protein uL2 (240 aa).

Positions 1 to 10 (MGHRISTQSR) are enriched in polar residues. Disordered stretches follow at residues 1–20 (MGHR…YRAP) and 204–240 (FGGG…GYRR).

Belongs to the universal ribosomal protein uL2 family. As to quaternary structure, part of the 50S ribosomal subunit. Forms a bridge to the 30S subunit in the 70S ribosome.

Functionally, one of the primary rRNA binding proteins. Required for association of the 30S and 50S subunits to form the 70S ribosome, for tRNA binding and peptide bond formation. It has been suggested to have peptidyltransferase activity; this is somewhat controversial. Makes several contacts with the 16S rRNA in the 70S ribosome. This is Large ribosomal subunit protein uL2 from Methanocorpusculum labreanum (strain ATCC 43576 / DSM 4855 / Z).